The primary structure comprises 221 residues: Putative gene 53 protein (221 aa).

The sequence is that of Putative gene 53 protein (53) from Bacillus phage SP01 (Bacteriophage SP01).